The following is a 191-amino-acid chain: MIDAEGYRLNVGIILSNDEGRVFWARRAGMRSWQFPQGGIKVDEDPDAAMFRELYEEVGLERQYVEIIARTKGWLRYQLPERFIRRRSYPLCIGQKQIWYILRLTGTDANIRLDCSERPEFDRWCWVDYWHPLSDVVYFKREVYRQALSELQRALQAGRPAGAQAVSDAGGTATRQIPVATEPSGPSSSQR.

The 144-residue stretch at 6–149 (GYRLNVGIIL…KREVYRQALS (144 aa)) folds into the Nudix hydrolase domain. A Nudix box motif is present at residues 38–59 (GGIKVDEDPDAAMFRELYEEVG). The tract at residues 162–191 (GAQAVSDAGGTATRQIPVATEPSGPSSSQR) is disordered.

It belongs to the Nudix hydrolase family. RppH subfamily. A divalent metal cation serves as cofactor.

Accelerates the degradation of transcripts by removing pyrophosphate from the 5'-end of triphosphorylated RNA, leading to a more labile monophosphorylated state that can stimulate subsequent ribonuclease cleavage. In Methylococcus capsulatus (strain ATCC 33009 / NCIMB 11132 / Bath), this protein is RNA pyrophosphohydrolase.